Consider the following 326-residue polypeptide: Small ribosomal subunit biogenesis GTPase RsgA (326 aa).

One can recognise a CP-type G domain in the interval 80 to 241 (LSHQMHIIAS…IIDTPGIKGF (162 aa)). Residues 129–132 (NKID) and 183–191 (GHSGVGKST) each bind GTP. Zn(2+) is bound by residues C265, C270, H272, and C278.

Belongs to the TRAFAC class YlqF/YawG GTPase family. RsgA subfamily. As to quaternary structure, monomer. Associates with 30S ribosomal subunit, binds 16S rRNA. Requires Zn(2+) as cofactor.

It localises to the cytoplasm. Its function is as follows. One of several proteins that assist in the late maturation steps of the functional core of the 30S ribosomal subunit. Helps release RbfA from mature subunits. May play a role in the assembly of ribosomal proteins into the subunit. Circularly permuted GTPase that catalyzes slow GTP hydrolysis, GTPase activity is stimulated by the 30S ribosomal subunit. The protein is Small ribosomal subunit biogenesis GTPase RsgA of Flavobacterium psychrophilum (strain ATCC 49511 / DSM 21280 / CIP 103535 / JIP02/86).